The primary structure comprises 131 residues: Small ribosomal subunit protein uS8 (131 aa).

It belongs to the universal ribosomal protein uS8 family. In terms of assembly, part of the 30S ribosomal subunit. Contacts proteins S5 and S12.

Its function is as follows. One of the primary rRNA binding proteins, it binds directly to 16S rRNA central domain where it helps coordinate assembly of the platform of the 30S subunit. This is Small ribosomal subunit protein uS8 from Wolbachia sp. subsp. Brugia malayi (strain TRS).